Consider the following 284-residue polypeptide: 2-dehydro-3-deoxyphosphooctonate aldolase (284 aa).

The protein belongs to the KdsA family.

It is found in the cytoplasm. It catalyses the reaction D-arabinose 5-phosphate + phosphoenolpyruvate + H2O = 3-deoxy-alpha-D-manno-2-octulosonate-8-phosphate + phosphate. It functions in the pathway carbohydrate biosynthesis; 3-deoxy-D-manno-octulosonate biosynthesis; 3-deoxy-D-manno-octulosonate from D-ribulose 5-phosphate: step 2/3. Its pathway is bacterial outer membrane biogenesis; lipopolysaccharide biosynthesis. This Aliivibrio salmonicida (strain LFI1238) (Vibrio salmonicida (strain LFI1238)) protein is 2-dehydro-3-deoxyphosphooctonate aldolase.